The following is a 452-amino-acid chain: tRNA modification GTPase MnmE (452 aa).

Arg-24, Glu-81, and Arg-120 together coordinate (6S)-5-formyl-5,6,7,8-tetrahydrofolate. The TrmE-type G domain occupies 216 to 373 (GIKTVIVGAP…LFGAIGRWAD (158 aa)). Residues 226-231 (NVGKSS), 245-251 (SAEPGTT), and 270-273 (DTAG) each bind GTP. Residues Ser-230 and Thr-251 each coordinate Mg(2+). Residue Lys-452 coordinates (6S)-5-formyl-5,6,7,8-tetrahydrofolate.

Belongs to the TRAFAC class TrmE-Era-EngA-EngB-Septin-like GTPase superfamily. TrmE GTPase family. As to quaternary structure, homodimer. Heterotetramer of two MnmE and two MnmG subunits. The cofactor is K(+).

It localises to the cytoplasm. In terms of biological role, exhibits a very high intrinsic GTPase hydrolysis rate. Involved in the addition of a carboxymethylaminomethyl (cmnm) group at the wobble position (U34) of certain tRNAs, forming tRNA-cmnm(5)s(2)U34. The chain is tRNA modification GTPase MnmE from Opitutus terrae (strain DSM 11246 / JCM 15787 / PB90-1).